A 533-amino-acid chain; its full sequence is Probable protein kinase UbiB (533 aa).

A helical membrane pass occupies residues 24–44 (LILELPMLPWWLRLLGATLPW). The region spanning 126–494 (RFEREPLASA…WKGSRHDWLG (369 aa)) is the Protein kinase domain. Residues 132 to 140 (LASASVAQV) and Lys154 contribute to the ATP site. Residue Asp289 is the Proton acceptor of the active site. The helical transmembrane segment at 510-530 (LGQQLEAWPAWVMLAGGVFLI) threads the bilayer.

This sequence belongs to the ABC1 family. UbiB subfamily.

It is found in the cell inner membrane. It participates in cofactor biosynthesis; ubiquinone biosynthesis [regulation]. Functionally, is probably a protein kinase regulator of UbiI activity which is involved in aerobic coenzyme Q (ubiquinone) biosynthesis. The polypeptide is Probable protein kinase UbiB (Pseudomonas aeruginosa (strain UCBPP-PA14)).